The following is a 276-amino-acid chain: MAIHLYKTSTPSTRNGTVDSQVKSNPRNNLIYGQHRCGKGRNARGIITAGHRGGGHKRLYRKIDFRRTEKDIYGRIVTIEYDPNRNAYICLIHYGDGEKRYILHPRGALIGDTIVSGTEVPIKMGNALPLSATDMPLGTAIHNIEITLGKGGQLARAAGAVAKLIAKEGKSATLKLPSGEVRLISKNCSATVGQVGNVGVNQKSLGRAGSKRWLGKRPVVRGVVMNPVDHPHGGGEGRAPIGRKKPTTPWGYPALGRRSRKRNKYSDNLILRRRSK.

Disordered stretches follow at residues M1–N25 and M225–K276. The segment covering K7–N25 has biased composition (polar residues).

Belongs to the universal ribosomal protein uL2 family. Part of the 50S ribosomal subunit.

Its subcellular location is the plastid. It is found in the chloroplast. The chain is Large ribosomal subunit protein uL2cy (rpl2-B) from Coffea arabica (Arabian coffee).